A 134-amino-acid chain; its full sequence is MPYWLPTYNFEGLQCLQCKKALGSLDALKCKNHKYRRVHRGGKPYGMCQICLEALLQLERQEFPWTLLLPKDFVKVLGRLPGDYCVRCYYCGCVLSDSEKDRHALDHEGYLYVRGRARGRCYSCSSDGRRPCVF.

2 zinc fingers span residues 15 to 51 and 88 to 124; these read CLQC…CQIC and CYYC…CYSC.

It belongs to the papillomaviridae E6 protein family. As to quaternary structure, forms homodimers. Interacts with ubiquitin-protein ligase UBE3A/E6-AP; this interaction stimulates UBE3A ubiquitin activity. Interacts with host BAK1.

The protein resides in the host cytoplasm. It localises to the host nucleus. Functionally, plays a major role in the induction and maintenance of cellular transformation. E6 associates with host UBE3A/E6-AP ubiquitin-protein ligase and modulates its activity. Protects host keratinocytes from apoptosis by mediating the degradation of host BAK1. May also inhibit host immune response. This Bos taurus (Bovine) protein is Protein E6.